The sequence spans 524 residues: MTPLDNEISRRRTFAIISHPDAGKTTLTEKLLWFGGAIQVAGEVRARKASRHATSDWMELEKQRGISVTSSVMQFPYRECMINLLDTPGHEDFSEDTYRTLTAVDSAVMVIDSVNGVEAQTIKLLNVCRMRDTPILTFINKLDREGKEPIDLLDEIESVLGIQCAPMTWPIGMGKRFRGVYHLYDDAIAFFDPQAEKGTAEIIQGLDNPRLDELIGTQADELRMDIELVRGASHAFDAEAYLSGKQSPVFFGSAVNNFGVQSLLDAVVDLSPPPIARPSVSREVLPNEPKFSGFVFKIQANMDPKHRDRIAFLRVCSGRFDRGMKVKQVASGKMLSINNAITFMARDRSTTDEAWPGDIIGIPNHGTIRLGETFTEGEDLRFTGIPSFAPEHFRLARIANPLKIKQLQKGLQQLAEEGATQLFRPLSGTDLILGAVGTLQFDVVASRLENEYGVQVIFEHYNCATARWIHGDAAELRQLSDRYSANVALDGADDPVYLAPNNVYLNMVKEKYPNLRFLEAREVA.

Residues 9–275 (SRRRTFAIIS…AVVDLSPPPI (267 aa)) enclose the tr-type G domain. GTP contacts are provided by residues 18 to 25 (SHPDAGKT), 86 to 90 (DTPGH), and 140 to 143 (NKLD).

The protein belongs to the TRAFAC class translation factor GTPase superfamily. Classic translation factor GTPase family. PrfC subfamily.

Its subcellular location is the cytoplasm. Its function is as follows. Increases the formation of ribosomal termination complexes and stimulates activities of RF-1 and RF-2. It binds guanine nucleotides and has strong preference for UGA stop codons. It may interact directly with the ribosome. The stimulation of RF-1 and RF-2 is significantly reduced by GTP and GDP, but not by GMP. In Dechloromonas aromatica (strain RCB), this protein is Peptide chain release factor 3.